Consider the following 433-residue polypeptide: MINLFRGLLVVLCFASAMVAAEEKNILVTSGSDRAAPIAVVPFGWQGGNVLPEDMAEIISNDLRNSGYYAPIPKQNMISLPTQASEVIFRDWKALGAQYVMVGNITPAGGRLQIQYALFNVATEQQVLTGNVSGTNDQLRDMAHYIADQSFEKLTGIKGAFSTRMLYVTAERFSENNTRYTLQRSDYDGARAVTLLQSREPILSPRFAPDGKRIAYVSFEQKRPRIFVQHIDTGRREQITNFEGLNGAPAWSPDGSKLAFVLSKDGNPEIYVINLASRQLSRVTNDSSIDTEPFFGKDGSTLYFTSDRGGKPQIYKTNINGGGAERVTFVGNYNANPKLSADEKTLVMIHRQDGFTNFKVAVQDLARGSVKILTDSNLDESPTVAPNGTMVIYATRQQGRGVLMLVSINGRVRLPLPTAQGEVREPSWSPYLN.

Residues 1–21 form the signal peptide; that stretch reads MINLFRGLLVVLCFASAMVAA.

It belongs to the TolB family. In terms of assembly, the Tol-Pal system is composed of five core proteins: the inner membrane proteins TolA, TolQ and TolR, the periplasmic protein TolB and the outer membrane protein Pal. They form a network linking the inner and outer membranes and the peptidoglycan layer.

The protein localises to the periplasm. Functionally, part of the Tol-Pal system, which plays a role in outer membrane invagination during cell division and is important for maintaining outer membrane integrity. The polypeptide is Tol-Pal system protein TolB (Pseudomonas syringae pv. tomato (strain ATCC BAA-871 / DC3000)).